We begin with the raw amino-acid sequence, 787 residues long: Protein translocase subunit SecA (787 aa).

ATP is bound by residues Gln85, 103 to 107, and Asp492; that span reads GEGKT.

This sequence belongs to the SecA family. In terms of assembly, monomer and homodimer. Part of the essential Sec protein translocation apparatus which comprises SecA, SecYEG and auxiliary proteins SecDF. Other proteins may also be involved.

Its subcellular location is the cell membrane. It is found in the cytoplasm. The enzyme catalyses ATP + H2O + cellular proteinSide 1 = ADP + phosphate + cellular proteinSide 2.. Part of the Sec protein translocase complex. Interacts with the SecYEG preprotein conducting channel. Has a central role in coupling the hydrolysis of ATP to the transfer of proteins into and across the cell membrane, serving as an ATP-driven molecular motor driving the stepwise translocation of polypeptide chains across the membrane. The sequence is that of Protein translocase subunit SecA from Latilactobacillus sakei subsp. sakei (strain 23K) (Lactobacillus sakei subsp. sakei).